We begin with the raw amino-acid sequence, 88 residues long: Small ribosomal subunit protein uS15 (88 aa).

The protein belongs to the universal ribosomal protein uS15 family. As to quaternary structure, part of the 30S ribosomal subunit. Forms a bridge to the 50S subunit in the 70S ribosome, contacting the 23S rRNA.

Functionally, one of the primary rRNA binding proteins, it binds directly to 16S rRNA where it helps nucleate assembly of the platform of the 30S subunit by binding and bridging several RNA helices of the 16S rRNA. Its function is as follows. Forms an intersubunit bridge (bridge B4) with the 23S rRNA of the 50S subunit in the ribosome. The chain is Small ribosomal subunit protein uS15 from Halothermothrix orenii (strain H 168 / OCM 544 / DSM 9562).